A 313-amino-acid chain; its full sequence is Olfactory receptor 1J1 (313 aa).

Topologically, residues 1–25 (MRLKNHSSVSEFLLLGFPIRPEQGG) are extracellular. An N-linked (GlcNAc...) asparagine glycan is attached at asparagine 5. The helical transmembrane segment at 26–46 (IFFSLFLAMYLITVLGNLLII) threads the bilayer. The Cytoplasmic segment spans residues 47–57 (LLIRLDSHLHT). Residues 58–78 (PMYFFLSHLAFTDISFSSVTV) traverse the membrane as a helical segment. At 79 to 97 (PKMLTKVQNQPIPITYEEC) the chain is on the extracellular side. A disulfide bridge links cysteine 97 with cysteine 189. The helical transmembrane segment at 98 to 118 (VSQTYFFIFFADLDSFLITSM) threads the bilayer. Residues 119-142 (AYDRYMAICHPLHYITIMSQSRCA) are Cytoplasmic-facing. The chain crosses the membrane as a helical span at residues 143–163 (MLVAVSWVIASACALLHSLLL). The Extracellular segment spans residues 164–196 (DQLSFCADHTVPHFFCDLGALLKLSCSDTSLNQ). A helical membrane pass occupies residues 197 to 217 (LVIFTAGLAAIMLPFLCILIS). The Cytoplasmic portion of the chain corresponds to 218-240 (YGRIGFTILQVPTTKGICKALST). A helical membrane pass occupies residues 241–261 (CGSHLSVVALYYGSIIGLYFL). Residues 262–271 (PPSNSKINNN) are Extracellular-facing. Residues 272–292 (IVASVMYTVVTPMLNPFIYSL) form a helical membrane-spanning segment. Residues 293–313 (RNKDMKGALKKLLSKKTEFSK) are Cytoplasmic-facing.

The protein belongs to the G-protein coupled receptor 1 family.

The protein resides in the cell membrane. Odorant receptor. The protein is Olfactory receptor 1J1 of Mus musculus (Mouse).